Reading from the N-terminus, the 123-residue chain is Methicillin resistance regulatory protein MecI (123 aa).

Positions 7 to 71 form a DNA-binding region, H-T-H motif; the sequence is EISSAEWEVM…KDNKIFQYYS (65 aa). The interval 74–123 is important for dimerization; the sequence is EESDIKYKTSKNFINKVYKGGFNSLVLNFVEKEDLSQDEIEELRNILNKK.

This sequence belongs to the BlaI transcriptional regulatory family. In terms of assembly, monomer and homodimer. Post-translationally, upon exposure to beta-lactams, proteolytic cleavage at a single site impairs dimerization and abolishes repressor activity.

The protein resides in the cytoplasm. Functionally, transcriptional repressor that constitutively blocks the transcription of the gene for the penicillin-binding protein MecA. Binds DNA as a dimer. In Mammaliicoccus sciuri (Staphylococcus sciuri), this protein is Methicillin resistance regulatory protein MecI (mecI).